Consider the following 483-residue polypeptide: Rhamnulokinase (483 aa).

11–15 (ASSGR) contacts ATP. Substrate contacts are provided by residues G79 and 234-236 (HDT). Residue D235 is the Proton acceptor of the active site. ATP is bound at residue T257. N294 lines the substrate pocket. An ATP-binding site is contributed by Q302. C352 and C369 are joined by a disulfide. Residue G401 coordinates ATP.

The protein belongs to the rhamnulokinase family. It depends on Mg(2+) as a cofactor.

It catalyses the reaction L-rhamnulose + ATP = L-rhamnulose 1-phosphate + ADP + H(+). It functions in the pathway carbohydrate degradation; L-rhamnose degradation; glycerone phosphate from L-rhamnose: step 2/3. Involved in the catabolism of L-rhamnose (6-deoxy-L-mannose). Catalyzes the transfer of the gamma-phosphate group from ATP to the 1-hydroxyl group of L-rhamnulose to yield L-rhamnulose 1-phosphate. The protein is Rhamnulokinase of Listeria innocua serovar 6a (strain ATCC BAA-680 / CLIP 11262).